The primary structure comprises 75 residues: uncharacterized protein (75 aa).

The helical transmembrane segment at 7–26 (ATAPLFVIVGLAVVLTGATG) threads the bilayer.

It is found in the membrane. This is an uncharacterized protein from Dictyostelium discoideum (Social amoeba).